Consider the following 179-residue polypeptide: Arginine repressor (179 aa).

The protein belongs to the ArgR family.

The protein localises to the cytoplasm. It functions in the pathway amino-acid biosynthesis; L-arginine biosynthesis [regulation]. In terms of biological role, regulates arginine biosynthesis genes. The sequence is that of Arginine repressor from Renibacterium salmoninarum (strain ATCC 33209 / DSM 20767 / JCM 11484 / NBRC 15589 / NCIMB 2235).